The chain runs to 334 residues: tRNA dimethylallyltransferase (334 aa).

Residue 22–29 (GPTASGKT) participates in ATP binding. 24–29 (TASGKT) lines the substrate pocket.

The protein belongs to the IPP transferase family. In terms of assembly, monomer. Requires Mg(2+) as cofactor.

It carries out the reaction adenosine(37) in tRNA + dimethylallyl diphosphate = N(6)-dimethylallyladenosine(37) in tRNA + diphosphate. Its function is as follows. Catalyzes the transfer of a dimethylallyl group onto the adenine at position 37 in tRNAs that read codons beginning with uridine, leading to the formation of N6-(dimethylallyl)adenosine (i(6)A). The chain is tRNA dimethylallyltransferase from Rhodopirellula baltica (strain DSM 10527 / NCIMB 13988 / SH1).